The chain runs to 235 residues: uncharacterized protein (235 aa).

This is an uncharacterized protein from Invertebrate iridescent virus 6 (IIV-6).